The primary structure comprises 1020 residues: Protein translocase subunit SecA (1020 aa).

ATP-binding positions include Gln-143, 161–165 (GEGKT), and Asp-661. The disordered stretch occupies residues 974 to 1020 (SVYNASPGAENEAPLQRPVTADSKPGRNDPCPCGSGKKYKNCHGQQP). Zn(2+) is bound by residues Cys-1004, Cys-1006, Cys-1015, and His-1016.

It belongs to the SecA family. In terms of assembly, monomer and homodimer. Part of the essential Sec protein translocation apparatus which comprises SecA, SecYEG and auxiliary proteins SecDF. Other proteins may also be involved. The cofactor is Zn(2+).

It localises to the cell inner membrane. The protein resides in the cytoplasm. It carries out the reaction ATP + H2O + cellular proteinSide 1 = ADP + phosphate + cellular proteinSide 2.. In terms of biological role, part of the Sec protein translocase complex. Interacts with the SecYEG preprotein conducting channel. Has a central role in coupling the hydrolysis of ATP to the transfer of proteins into and across the cell membrane, serving as an ATP-driven molecular motor driving the stepwise translocation of polypeptide chains across the membrane. The sequence is that of Protein translocase subunit SecA from Chlorobium phaeovibrioides (strain DSM 265 / 1930) (Prosthecochloris vibrioformis (strain DSM 265)).